We begin with the raw amino-acid sequence, 469 residues long: Putative dipeptidase SAUSA300_1697 (469 aa).

His-84 serves as a coordination point for Zn(2+). Asp-86 is a catalytic residue. Asp-115 contributes to the Zn(2+) binding site. The Proton acceptor role is filled by Glu-149. The Zn(2+) site is built by Glu-150, Asp-173, and His-440.

Belongs to the peptidase M20A family. Zn(2+) is required as a cofactor.

The protein is Putative dipeptidase SAUSA300_1697 of Staphylococcus aureus (strain USA300).